Consider the following 87-residue polypeptide: Large ribosomal subunit protein bL27 (87 aa).

A disordered region spans residues 1–26 (MAHKKGTGSTRNGRDSNSKRLGVKAY).

It belongs to the bacterial ribosomal protein bL27 family.

The protein is Large ribosomal subunit protein bL27 of Prochlorococcus marinus (strain SARG / CCMP1375 / SS120).